A 179-amino-acid polypeptide reads, in one-letter code: Ribosome maturation factor RimM (179 aa).

The 80-residue stretch at 95-174 (KDEFFYFDIL…QIFCTQDAFL (80 aa)) folds into the PRC barrel domain.

This sequence belongs to the RimM family. As to quaternary structure, binds ribosomal protein uS19.

The protein resides in the cytoplasm. Its function is as follows. An accessory protein needed during the final step in the assembly of 30S ribosomal subunit, possibly for assembly of the head region. Essential for efficient processing of 16S rRNA. May be needed both before and after RbfA during the maturation of 16S rRNA. It has affinity for free ribosomal 30S subunits but not for 70S ribosomes. The protein is Ribosome maturation factor RimM of Campylobacter jejuni subsp. jejuni serotype O:6 (strain 81116 / NCTC 11828).